Consider the following 272-residue polypeptide: NADPH-dependent 7-cyano-7-deazaguanine reductase (272 aa).

82-84 (IES) is a binding site for substrate. An NADPH-binding site is contributed by 84–85 (SK). The Thioimide intermediate role is filled by Cys178. The active-site Proton donor is the Asp185. 217 to 218 (HE) provides a ligand contact to substrate. Residue 246–247 (RG) participates in NADPH binding.

This sequence belongs to the GTP cyclohydrolase I family. QueF type 2 subfamily. In terms of assembly, homodimer.

The protein resides in the cytoplasm. The enzyme catalyses 7-aminomethyl-7-carbaguanine + 2 NADP(+) = 7-cyano-7-deazaguanine + 2 NADPH + 3 H(+). Its pathway is tRNA modification; tRNA-queuosine biosynthesis. In terms of biological role, catalyzes the NADPH-dependent reduction of 7-cyano-7-deazaguanine (preQ0) to 7-aminomethyl-7-deazaguanine (preQ1). In Stenotrophomonas maltophilia (strain R551-3), this protein is NADPH-dependent 7-cyano-7-deazaguanine reductase.